Here is a 1574-residue protein sequence, read N- to C-terminus: Synaptojanin-1 (1574 aa).

In terms of domain architecture, SAC spans 119-442 (VRKVLNSGNF…GDSISKIYAG (324 aa)). Phosphoserine occurs at positions 820 and 830. The RRM domain maps to 894–971 (GTVLVSIKSS…RTITITLKSP (78 aa)). The span at 1029 to 1054 (HLQPSSSSGLGTSPSSSPRTSPCQSP) shows a compositional bias: low complexity. Positions 1029 to 1327 (HLQPSSSSGL…GVKQEPTLKS (299 aa)) are disordered. A Phosphoserine modification is found at Ser-1053. Polar residues predominate over residues 1080 to 1100 (SSQGSPVDTQPAAQKDSSQTL). Residues 1105–1127 (PPPPRPVAPPARPAPPQRPPPPS) are compositionally biased toward pro residues. Phosphoserine occurs at positions 1147 and 1175. The residue at position 1198 (Arg-1198) is an Omega-N-methylarginine. Thr-1217 bears the Phosphothreonine mark. Positions 1268-1287 (TMPPSGPQPNLETPPQPPPR) are enriched in pro residues. The span at 1288–1307 (SRSSQSLPSDSSPQLQQEQP) shows a compositional bias: low complexity. Phosphoserine occurs at positions 1290 and 1350. Thr-1354 bears the Phosphothreonine mark. Disordered stretches follow at residues 1363 to 1507 (LPSA…SVCP) and 1532 to 1574 (LPAR…FTER). Polar residues-rich tracts occupy residues 1364–1379 (PSASQSQVNPLSSVSC), 1393–1402 (QESMGSSANP), 1424–1436 (RVQSQESEATSWL), and 1472–1484 (DLQSQSTVKTSNP). Residues 1403–1425 (FPSLPCRNPFTDRTAAPGNPFRV) are 3 X 3 AA repeats of N-P-F. The segment covering 1535–1548 (RRPPPPPPPVPLLP) has biased composition (pro residues). Low complexity predominate over residues 1549-1563 (PGTTSSAGPSTTLPS). Polar residues predominate over residues 1565–1574 (APSTLDFTER).

Belongs to the synaptojanin family. This sequence in the central section; belongs to the inositol 1,4,5-trisphosphate 5-phosphatase family. As to quaternary structure, interacts with ASH/GRB2. Interacts with PACSIN1, PACSIN2 and PACSIN3. Interacts with AMPH, SH3GL1, SH3GL2 and SH3GL3. Interacts with MYO1E (via SH3 domain). Interacts with BIN1 and DNM1. Interacts with EPS15.

Its subcellular location is the cytoplasm. It localises to the perinuclear region. The catalysed reaction is a 1,2-diacyl-sn-glycero-3-phospho-(1D-myo-inositol-4,5-bisphosphate) + H2O = a 1,2-diacyl-sn-glycero-3-phospho-(1D-myo-inositol 4-phosphate) + phosphate. Its function is as follows. Phosphatase that acts on various phosphoinositides, including phosphatidylinositol 4-phosphate, phosphatidylinositol (4,5)-bisphosphate and phosphatidylinositol (3,4,5)-trisphosphate. Has a role in clathrin-mediated endocytosis. Hydrolyzes PIP2 bound to actin regulatory proteins resulting in the rearrangement of actin filaments downstream of tyrosine kinase and ASH/GRB2. The sequence is that of Synaptojanin-1 (Synj1) from Mus musculus (Mouse).